The following is a 79-amino-acid chain: Acyl carrier protein (79 aa).

The Carrier domain maps to 2-77 (ESIEQRVKKI…QAVDYINSHG (76 aa)). O-(pantetheine 4'-phosphoryl)serine is present on serine 37.

This sequence belongs to the acyl carrier protein (ACP) family. In terms of processing, 4'-phosphopantetheine is transferred from CoA to a specific serine of apo-ACP by AcpS. This modification is essential for activity because fatty acids are bound in thioester linkage to the sulfhydryl of the prosthetic group.

It is found in the cytoplasm. It functions in the pathway lipid metabolism; fatty acid biosynthesis. Its function is as follows. Carrier of the growing fatty acid chain in fatty acid biosynthesis. The polypeptide is Acyl carrier protein (Bordetella parapertussis (strain 12822 / ATCC BAA-587 / NCTC 13253)).